A 205-amino-acid chain; its full sequence is Golgi apparatus membrane protein TVP23 homolog B (205 aa).

Met-1 carries the N-acetylmethionine modification. Over residues Met-1 to Glu-21 the composition is skewed to acidic residues. A disordered region spans residues Met-1–Arg-27. The next 4 membrane-spanning stretches (helical) occupy residues Pro-34–Leu-53, Cys-54–Leu-72, Ile-126–Leu-146, and Lys-152–Ile-172.

This sequence belongs to the TVP23 family.

The protein localises to the membrane. This is Golgi apparatus membrane protein TVP23 homolog B (Tvp23b) from Mus musculus (Mouse).